Consider the following 311-residue polypeptide: Purine nucleoside phosphorylase (311 aa).

N-acetylserine is present on Ser-2. Residues Ser-46, His-81, Arg-101–His-103, and Ala-134 contribute to the phosphate site. Glu-219 provides a ligand contact to a purine D-ribonucleoside. Residue Ser-238 participates in phosphate binding. Residue Asn-261 participates in a purine D-ribonucleoside binding. Ser-275 carries the phosphoserine modification.

The protein belongs to the PNP/MTAP phosphorylase family.

It catalyses the reaction a purine D-ribonucleoside + phosphate = a purine nucleobase + alpha-D-ribose 1-phosphate. It functions in the pathway purine metabolism; purine nucleoside salvage. Its function is as follows. The purine nucleoside phosphorylases catalyze the phosphorolytic breakdown of the N-glycosidic bond in the beta-(deoxy)ribonucleoside molecules, with the formation of the corresponding free purine bases and pentose-1-phosphate. Cleaves guanosine and inosine. This Saccharomyces cerevisiae (strain ATCC 204508 / S288c) (Baker's yeast) protein is Purine nucleoside phosphorylase (PNP1).